A 2138-amino-acid polypeptide reads, in one-letter code: Non-reducing polyketide synthase rads2 (2138 aa).

Residues 11–249 (LIFGDQTDSW…NPLNIHALQH (239 aa)) form an N-terminal acylcarrier protein transacylase (SAT) domain region. The Ketosynthase family 3 (KS3) domain occupies 373-804 (SGRIAIVGMA…GGNACMLLED (432 aa)). Catalysis depends on for beta-ketoacyl synthase activity residues Cys-549, His-684, and His-724. The tract at residues 901-1184 (VFVFGGQGSH…KGVCTSFVRA (284 aa)) is malonyl-CoA:ACP transacylase (MAT) domain. The active-site For acyl/malonyl transferase activity is the Ser-992. Positions 1291-1437 (AQYVVQESPS…KDVQRLQADW (147 aa)) are N-terminal hotdog fold. The 320-residue stretch at 1291-1610 (AQYVVQESPS…FHEISNATLK (320 aa)) folds into the PKS/mFAS DH domain. The tract at residues 1303-1607 (KKIQVTFRAS…GLEFHEISNA (305 aa)) is product template (PT) domain. Positions 1459–1610 (HGHRFQPDIF…FHEISNATLK (152 aa)) are C-terminal hotdog fold. The tract at residues 1618 to 1666 (SKSVLKPDNAAPLKAPEKKEDATPTAPKKSADPGKEEEEEGDTATPAAV) is disordered. Positions 1666-1740 (VGEFEVIIQT…DLRRAFAMAP (75 aa)) constitute a Carrier domain. Ser-1700 carries the post-translational modification O-(pantetheine 4'-phosphoryl)serine. A compositionally biased stretch (low complexity) spans 1740 to 1771 (PSSSSSTSASESVSESLDDSSSTSRSATPSSS). 2 disordered regions span residues 1740 to 1781 (PSSS…GFVE) and 1807 to 1828 (QATK…SSPA). Positions 1860–2006 (ADGTGSIATY…TRRHLGAMFS (147 aa)) are thioesterase (TE) domain.

It participates in secondary metabolite biosynthesis. Its function is as follows. Non-reducing polyketide synthase; part of the gene cluster that mediates the biosynthesis of radicicol, a resorcylic acid lactone (RAL) that irreversibly inhibits the HSP90 molecular chaperone, an important target for cancer chemotherapy. The cluster encodes only two apparent post-PKS enzymes, a cytochrome P450 monooxygenase (radP) and a non-heme halogenase (radH) that introduce the epoxide and the chlorine, respectively. If this cluster includes all the genes required for radicicol biosynthesis, the remaining structural features of radicicol are presumably generated by the PKSs rads1 and rads2. The C-2' ketone could arise if the R-PKS rads1 and NR-PKS rads2 each carry out four iterations, in contrast to the five iteration-three iteration split for the hypothemycin PKSs. The origin of the cis 5',6' double bond is not known. The radicicol R-PKS rads1 ER domain may catalyze either double bond isomerization or reduction in the third iteration. The polypeptide is Non-reducing polyketide synthase rads2 (Floropilus chiversii (Chaetomium chiversii)).